Here is a 459-residue protein sequence, read N- to C-terminus: DNA-binding protein P3A2 (459 aa).

Residues 1–25 (MMISEDISEPSSPDTPFDDSDLLNS) form a disordered region.

Belongs to the NRF1/Ewg family.

The protein resides in the nucleus. Its function is as follows. Transcriptional regulator that interacts with specific sites in the control region of the cyIIIa actin gene. Also binds specifically to similar target sites located in the regulatory region of the SM50 gene. The chain is DNA-binding protein P3A2 from Strongylocentrotus purpuratus (Purple sea urchin).